Here is a 238-residue protein sequence, read N- to C-terminus: Putative ABC transporter ATP-binding protein AF_1841 (238 aa).

The region spanning 8 to 238 (IEADSVSYDY…EELLEKAGVI (231 aa)) is the ABC transporter domain. An ATP-binding site is contributed by 41–48 (GANGSGKS).

This sequence belongs to the ABC transporter superfamily.

The protein localises to the cell membrane. In terms of biological role, probably part of an ABC transporter complex. Responsible for energy coupling to the transport system. The chain is Putative ABC transporter ATP-binding protein AF_1841 from Archaeoglobus fulgidus (strain ATCC 49558 / DSM 4304 / JCM 9628 / NBRC 100126 / VC-16).